The sequence spans 568 residues: Vacuolar protein 8 (568 aa).

Residue glycine 2 is the site of N-myristoyl glycine attachment. Residues cysteine 4, cysteine 5, and cysteine 7 are each lipidated (S-palmitoyl cysteine). ARM repeat units lie at residues 37–74 (DKDN…FAEI), 75–114 (TEKY…NLAV), 116–155 (NENK…NLAT), 157–196 (DDNK…NMTH), 198–237 (GENR…NIAV), 241–280 (NRRK…NLAS), 282–321 (TGYQ…NISI), 323–363 (PLNE…NLAA), and 407–446 (DNSK…NLCS).

This sequence belongs to the beta-catenin family.

It localises to the vacuole membrane. Functions in both vacuole inheritance and protein targeting from the cytoplasm to vacuole. In Eremothecium gossypii (strain ATCC 10895 / CBS 109.51 / FGSC 9923 / NRRL Y-1056) (Yeast), this protein is Vacuolar protein 8 (VAC8).